Here is a 584-residue protein sequence, read N- to C-terminus: Transcriptional regulator STP2 (584 aa).

Polar residues-rich tracts occupy residues 1–11 (MSVAITSNNNK) and 180–202 (AESN…SISD). 2 disordered regions span residues 1-22 (MSVA…PHLK) and 161-214 (KMHP…STVS). The segment covering 203–214 (SPSHSETESTVS) has biased composition (low complexity). A C2H2-type zinc finger spans residues 225 to 247 (FKCPSCDAEFRVRGYLTRHMKKH). 2 disordered regions span residues 381–496 (RQKK…PQQP) and 553–584 (QYQP…SMYF). Residues 394 to 407 (SESSIQSQESESSI) show a composition bias toward low complexity. Residues 431 to 441 (QHQHQHHHHVQ) show a composition bias toward basic residues. Over residues 442-480 (NQHQQHVNQQQSIATPASIYSSSASSTSSYESTHSPYTP) the composition is skewed to low complexity. Residues 481–496 (QSSRSPLSHMYNPQQP) show a composition bias toward polar residues.

Proteolytically cleaved: activated by the amino acid-induced proteolytic removal of an N-terminal inhibitory domain.

It localises to the cell membrane. Its subcellular location is the nucleus. Functionally, transcription factor involved in the regulation of gene expression in response to extracellular amino acid levels. Synthesized as latent cytoplasmic precursor, which, upon a signal initiated by the plasma membrane SPS amino acid sensor system (including CSY1 and CSH3), becomes proteolytically activated and relocates to the nucleus, where it induces the expression of SPS-sensor-regulated genes. Required for efficient alkalinization through the release of ammonia from the cells produced during the breakdown of amino acids, and subsequent switch to the hyphal form. In Candida albicans (strain SC5314 / ATCC MYA-2876) (Yeast), this protein is Transcriptional regulator STP2 (STP2).